We begin with the raw amino-acid sequence, 184 residues long: Elongation factor P (184 aa).

Belongs to the elongation factor P family.

It is found in the cytoplasm. Its pathway is protein biosynthesis; polypeptide chain elongation. Its function is as follows. Involved in peptide bond synthesis. Stimulates efficient translation and peptide-bond synthesis on native or reconstituted 70S ribosomes in vitro. Probably functions indirectly by altering the affinity of the ribosome for aminoacyl-tRNA, thus increasing their reactivity as acceptors for peptidyl transferase. The sequence is that of Elongation factor P from Delftia acidovorans (strain DSM 14801 / SPH-1).